A 352-amino-acid polypeptide reads, in one-letter code: Chorismate synthase (352 aa).

NADP(+) is bound at residue arginine 48. Residues 125–127 (RSS), 238–239 (NA), glycine 278, 293–297 (KPTSS), and arginine 319 contribute to the FMN site.

This sequence belongs to the chorismate synthase family. As to quaternary structure, homotetramer. The cofactor is FMNH2.

It catalyses the reaction 5-O-(1-carboxyvinyl)-3-phosphoshikimate = chorismate + phosphate. It functions in the pathway metabolic intermediate biosynthesis; chorismate biosynthesis; chorismate from D-erythrose 4-phosphate and phosphoenolpyruvate: step 7/7. In terms of biological role, catalyzes the anti-1,4-elimination of the C-3 phosphate and the C-6 proR hydrogen from 5-enolpyruvylshikimate-3-phosphate (EPSP) to yield chorismate, which is the branch point compound that serves as the starting substrate for the three terminal pathways of aromatic amino acid biosynthesis. This reaction introduces a second double bond into the aromatic ring system. The polypeptide is Chorismate synthase (Legionella pneumophila (strain Paris)).